Here is a 266-residue protein sequence, read N- to C-terminus: Glucosamine-6-phosphate deaminase (266 aa).

Asp72 acts as the Proton acceptor; for enolization step in catalysis. Asp141 acts as the For ring-opening step in catalysis. His143 acts as the Proton acceptor; for ring-opening step in catalysis. The active-site For ring-opening step is Glu148.

Belongs to the glucosamine/galactosamine-6-phosphate isomerase family. NagB subfamily. In terms of assembly, homohexamer.

The enzyme catalyses alpha-D-glucosamine 6-phosphate + H2O = beta-D-fructose 6-phosphate + NH4(+). It functions in the pathway amino-sugar metabolism; N-acetylneuraminate degradation; D-fructose 6-phosphate from N-acetylneuraminate: step 5/5. With respect to regulation, allosterically activated by N-acetylglucosamine 6-phosphate (GlcNAc6P). Functionally, catalyzes the reversible isomerization-deamination of glucosamine 6-phosphate (GlcN6P) to form fructose 6-phosphate (Fru6P) and ammonium ion. This chain is Glucosamine-6-phosphate deaminase, found in Yersinia pestis bv. Antiqua (strain Antiqua).